The chain runs to 493 residues: Betaine aldehyde dehydrogenase (493 aa).

3 residues coordinate K(+): serine 32, isoleucine 33, and aspartate 99. Position 156–158 (156–158) interacts with NAD(+); the sequence is GAW. Lysine 168 acts as the Charge relay system in catalysis. NAD(+) contacts are provided by residues 182 to 185 and 235 to 238; these read KPSE and SVPT. Leucine 250 contributes to the K(+) binding site. Glutamate 256 (proton acceptor) is an active-site residue. Residues glycine 258, cysteine 290, and glutamate 390 each coordinate NAD(+). Cysteine 290 functions as the Nucleophile in the catalytic mechanism. Cysteine 290 carries the post-translational modification Cysteine sulfenic acid (-SOH). K(+) is bound by residues lysine 460 and glycine 463. Glutamate 467 acts as the Charge relay system in catalysis.

It belongs to the aldehyde dehydrogenase family. In terms of assembly, dimer of dimers. K(+) serves as cofactor.

The catalysed reaction is betaine aldehyde + NAD(+) + H2O = glycine betaine + NADH + 2 H(+). It participates in amine and polyamine biosynthesis; betaine biosynthesis via choline pathway; betaine from betaine aldehyde: step 1/1. Functionally, involved in the biosynthesis of the osmoprotectant glycine betaine. Catalyzes the irreversible oxidation of betaine aldehyde to the corresponding acid. The polypeptide is Betaine aldehyde dehydrogenase (Agrobacterium fabrum (strain C58 / ATCC 33970) (Agrobacterium tumefaciens (strain C58))).